Reading from the N-terminus, the 559-residue chain is Oxygen-dependent choline dehydrogenase (559 aa).

Asp-4–Glu-33 serves as a coordination point for FAD. Residues Glu-182–Ala-201 are disordered. His-471 acts as the Proton acceptor in catalysis.

It belongs to the GMC oxidoreductase family. The cofactor is FAD.

It catalyses the reaction choline + A = betaine aldehyde + AH2. It carries out the reaction betaine aldehyde + NAD(+) + H2O = glycine betaine + NADH + 2 H(+). It participates in amine and polyamine biosynthesis; betaine biosynthesis via choline pathway; betaine aldehyde from choline (cytochrome c reductase route): step 1/1. In terms of biological role, involved in the biosynthesis of the osmoprotectant glycine betaine. Catalyzes the oxidation of choline to betaine aldehyde and betaine aldehyde to glycine betaine at the same rate. In Pectobacterium carotovorum subsp. carotovorum (strain PC1), this protein is Oxygen-dependent choline dehydrogenase.